A 288-amino-acid polypeptide reads, in one-letter code: Shikimate dehydrogenase (NADP(+)) (288 aa).

Shikimate-binding positions include 15 to 17 (SKS) and threonine 64. Residue lysine 68 is the Proton acceptor of the active site. NADP(+) is bound at residue glutamate 83. Shikimate-binding residues include asparagine 92 and aspartate 117. NADP(+) is bound by residues 141 to 145 (GAGGA), 165 to 170 (NRTLSK), and methionine 232. Tyrosine 234 is a binding site for shikimate. Residue glycine 254 coordinates NADP(+).

This sequence belongs to the shikimate dehydrogenase family. As to quaternary structure, homodimer.

It catalyses the reaction shikimate + NADP(+) = 3-dehydroshikimate + NADPH + H(+). Its pathway is metabolic intermediate biosynthesis; chorismate biosynthesis; chorismate from D-erythrose 4-phosphate and phosphoenolpyruvate: step 4/7. Involved in the biosynthesis of the chorismate, which leads to the biosynthesis of aromatic amino acids. Catalyzes the reversible NADPH linked reduction of 3-dehydroshikimate (DHSA) to yield shikimate (SA). The protein is Shikimate dehydrogenase (NADP(+)) of Psychrobacter arcticus (strain DSM 17307 / VKM B-2377 / 273-4).